Here is a 363-residue protein sequence, read N- to C-terminus: Crh-like protein 3 (363 aa).

A signal peptide spans 1-19 (MSLLYLVALFVASICSVTA). Cys25 and Cys32 are oxidised to a cystine. Positions 26–237 (NPLTTTCPPD…YSKAPFTMVL (212 aa)) constitute a GH16 domain. 3 N-linked (GlcNAc...) asparagine glycosylation sites follow: Asn41, Asn47, and Asn56. The active-site Nucleophile is Glu118. Residue Glu122 is the Proton donor of the active site. Residue Glu122 participates in chitin binding. Asn127, Asn141, and Asn161 each carry an N-linked (GlcNAc...) asparagine glycan. Chitin contacts are provided by Arg203, Trp207, and Thr218. N-linked (GlcNAc...) asparagine glycosylation is found at Asn252 and Asn269. A helical transmembrane segment spans residues 298-318 (VYIGAGCVGAALLAGFIFFFI).

The protein belongs to the glycosyl hydrolase 16 family. CRH1 subfamily. Post-translationally, the GPI-like anchor contains a phosphoceramide lipid group. The anchor position has not been determined.

It is found in the cell membrane. It localises to the secreted. The protein localises to the cell wall. It catalyses the reaction Random endo-hydrolysis of N-acetyl-beta-D-glucosaminide (1-&gt;4)-beta-linkages in chitin and chitodextrins.. Dual chitinase/transglycosylase that plays a role in cell wall architecture. Chitinase and transglycosylase activities are coupled. Required for the polysaccharide cross-linking at the septa and the cell wall. More specifically, transfers chitin to 1,6-beta-glucan in the cell wall. This Aspergillus fumigatus (strain ATCC MYA-4609 / CBS 101355 / FGSC A1100 / Af293) (Neosartorya fumigata) protein is Crh-like protein 3.